Consider the following 81-residue polypeptide: ATP synthase subunit c (81 aa).

2 consecutive transmembrane segments (helical) span residues 6–26 and 57–77; these read ASAS…GPGI and LAFM…LLFA.

This sequence belongs to the ATPase C chain family. F-type ATPases have 2 components, F(1) - the catalytic core - and F(0) - the membrane proton channel. F(1) has five subunits: alpha(3), beta(3), gamma(1), delta(1), epsilon(1). F(0) has four main subunits: a(1), b(1), b'(1) and c(10-14). The alpha and beta chains form an alternating ring which encloses part of the gamma chain. F(1) is attached to F(0) by a central stalk formed by the gamma and epsilon chains, while a peripheral stalk is formed by the delta, b and b' chains.

It is found in the cellular thylakoid membrane. In terms of biological role, f(1)F(0) ATP synthase produces ATP from ADP in the presence of a proton or sodium gradient. F-type ATPases consist of two structural domains, F(1) containing the extramembraneous catalytic core and F(0) containing the membrane proton channel, linked together by a central stalk and a peripheral stalk. During catalysis, ATP synthesis in the catalytic domain of F(1) is coupled via a rotary mechanism of the central stalk subunits to proton translocation. Key component of the F(0) channel; it plays a direct role in translocation across the membrane. A homomeric c-ring of between 10-14 subunits forms the central stalk rotor element with the F(1) delta and epsilon subunits. The chain is ATP synthase subunit c from Gloeothece citriformis (strain PCC 7424) (Cyanothece sp. (strain PCC 7424)).